A 118-amino-acid chain; its full sequence is Small ribosomal subunit protein uS13 (118 aa).

Residues 94-118 form a disordered region; the sequence is SLPLRGQRTKTNARTRKGPRKPIRK.

It belongs to the universal ribosomal protein uS13 family. In terms of assembly, part of the 30S ribosomal subunit. Forms a loose heterodimer with protein S19. Forms two bridges to the 50S subunit in the 70S ribosome.

Its function is as follows. Located at the top of the head of the 30S subunit, it contacts several helices of the 16S rRNA. In the 70S ribosome it contacts the 23S rRNA (bridge B1a) and protein L5 of the 50S subunit (bridge B1b), connecting the 2 subunits; these bridges are implicated in subunit movement. Contacts the tRNAs in the A and P-sites. This is Small ribosomal subunit protein uS13 from Shewanella frigidimarina (strain NCIMB 400).